The following is a 510-amino-acid chain: MNPQTDNVFYATNAFTGEALPLAFPVHTEVEVNQAATAAAKVARDFRRLNNSKRASLLRTIASELEARSDDIIARAHLETALPEVRLTGEIARTANQLRLFADVVNSGSYHQAILDTPNPTRAPLPKPDIRRQQIALGPVAVFGASNFPLAFSAAGGDTASALAAGCPVIVKGHTAHPGTSQIVAECIEQALKQEQLPQAIFTLLQGNQRALGQALVSHPEIKAVGFTGSVGGGRALFNLAHERPEPIPFYGELGAINPTFIFPSAMRAKADLADQFVASMTMGCGQFCTKPGVVFALNTPETQAFIETAQSLIRQQSPSTLLTPGIRDSYQSQVVSRGSDDGIDVTFSQAESPCVASALFVTSSENWRKHPAWEEEIFGPQSLIVVCENVADMLSLSEMLAGSLTATIHATEEDYPQVSQLIPRLEEIAGRLVFNGWPTGVEVGYAMVHGGPYPASTHSASTSVGAEAIHRWLRPVAYQALPESLLPDSLKAENPLEIARAVDGKAAHS.

Residue 229 to 234 (GSVGGG) coordinates NADP(+). Catalysis depends on residues E253 and C289.

This sequence belongs to the aldehyde dehydrogenase family. Homodimer.

The enzyme catalyses an aldehyde + NADP(+) + H2O = a carboxylate + NADPH + 2 H(+). Its function is as follows. Catalyzes the oxidation of long-chain aliphatic aldehydes to acids. May be implicated in controlling luminescence as it catalyzes the oxidation of the fatty aldehyde substrate for the light-emitting reaction. The polypeptide is NADP-dependent fatty aldehyde dehydrogenase (aldH) (Vibrio harveyi (Beneckea harveyi)).